A 701-amino-acid polypeptide reads, in one-letter code: Sodium/hydrogen exchanger 6 (701 aa).

The next 2 membrane-spanning stretches (helical) occupy residues 71–91 and 103–123; these read SANLLIFILLLTLTILTIWLF and GLAMIYGLLVGLVLRYGIHVP. An N-linked (GlcNAc...) asparagine glycan is attached at Asn128. A run of 8 helical transmembrane segments spans residues 176 to 196, 211 to 231, 252 to 272, 278 to 298, 324 to 344, 372 to 392, 414 to 434, and 436 to 456; these read VTFDPEVFFNILLPPIIFYAG, ILAYAFLGTAISCFVIGSIMY, CLLFGAIVSATDPVTVLAIFH, VELYALLFGESVLNDAVAIVL, IGIFLGIFSGSFAMGAATGVV, TFLLAEAWGFTGVVAVLFCGI, FELLNFLAENFIFSYMGLTLF, and FQNHVFNPTFVVGAFVAIFLG. Residue Lys475 forms a Glycyl lysine isopeptide (Lys-Gly) (interchain with G-Cter in ubiquitin) linkage. 2 consecutive transmembrane segments (helical) span residues 479 to 499 and 515 to 535; these read NFQHMMMFAGLRGAMAFALAI and LLIVFFTVWVFGGGTTAMLSC.

The protein belongs to the monovalent cation:proton antiporter 1 (CPA1) transporter (TC 2.A.36) family. As to quaternary structure, homodimer. Interacts with RACK1; regulates the distribution of SLC9A6 between endosomes and the plasma membrane. Ubiquitinated (in vitro). Post-translationally, glycosylated. Ubiquitous. High expression in brain, skeletal muscle, and heart, but is also detected at lower levels in most other tissues.

It is found in the endosome membrane. The protein resides in the recycling endosome membrane. It localises to the early endosome membrane. Its subcellular location is the late endosome membrane. The protein localises to the cell membrane. The enzyme catalyses Na(+)(in) + H(+)(out) = Na(+)(out) + H(+)(in). It catalyses the reaction K(+)(in) + H(+)(out) = K(+)(out) + H(+)(in). Functionally, endosomal Na(+), K(+)/H(+) antiporter. Mediates the electroneutral exchange of endosomal luminal H(+) for a cytosolic Na(+) or K(+). By facilitating proton efflux, SLC9A6 counteracts the acidity generated by vacuolar (V)-ATPase, thereby limiting luminal acidification. Responsible for alkalizing and maintaining the endosomal pH, and consequently in, e.g., endosome maturation and trafficking of recycling endosomal cargo. Plays a critical role during neurodevelopment by regulating synaptic development and plasticity. Implicated in the maintenance of cell polarity in a manner that is dependent on its ability to modulate intravesicular pH. Regulates intracelular pH in some specialized cells, osteoclasts and stereocilia where this transporter localizes to the plasma membrane. This Homo sapiens (Human) protein is Sodium/hydrogen exchanger 6.